A 955-amino-acid polypeptide reads, in one-letter code: 2-oxoglutarate dehydrogenase E1 component (955 aa).

Belongs to the alpha-ketoglutarate dehydrogenase family. Homodimer. Part of the 2-oxoglutarate dehydrogenase (OGDH) complex composed of E1 (2-oxoglutarate dehydrogenase), E2 (dihydrolipoamide succinyltransferase) and E3 (dihydrolipoamide dehydrogenase); the complex contains multiple copies of the three enzymatic components (E1, E2 and E3). The cofactor is thiamine diphosphate.

The catalysed reaction is N(6)-[(R)-lipoyl]-L-lysyl-[protein] + 2-oxoglutarate + H(+) = N(6)-[(R)-S(8)-succinyldihydrolipoyl]-L-lysyl-[protein] + CO2. Its function is as follows. E1 component of the 2-oxoglutarate dehydrogenase (OGDH) complex which catalyzes the decarboxylation of 2-oxoglutarate, the first step in the conversion of 2-oxoglutarate to succinyl-CoA and CO(2). The polypeptide is 2-oxoglutarate dehydrogenase E1 component (Bacillus cereus (strain B4264)).